Consider the following 370-residue polypeptide: Leucine-rich repeat and transmembrane domain-containing protein 2 (370 aa).

Positions 1–35 (MLAPGSSPGQRGRLALQWRQVSWITCWIALYAVEA) are cleaved as a signal peptide. In terms of domain architecture, LRRNT spans 36–68 (LPTCPFSCKCDSRSLEVDCSGLGLTTVPPDVPA). The Extracellular segment spans residues 36–310 (LPTCPFSCKC…PASVRRAMGT (275 aa)). 5 LRR repeats span residues 69–90 (ATRT…AFAN), 93–114 (SLQR…IFGD), 117–139 (NLTE…LRHS), 141–162 (LLRH…LFDG), and 165–186 (ALRS…TFEP). The N-linked (GlcNAc...) asparagine glycan is linked to asparagine 90. N-linked (GlcNAc...) asparagine glycans are attached at residues asparagine 117 and asparagine 125. The LRRCT domain maps to 198–252 (NPWECDCNLREFKHWMEWFSYRGGRLDQLACTLPKELRGKDMRMVPMEMFNYCSQ). Asparagine 257 carries N-linked (GlcNAc...) asparagine glycosylation. The disordered stretch occupies residues 261-300 (GLDIPGPPCTKASPEPAKPKPGAEPEPEPSTACPQKQRHR). Residues 311 to 331 (VIIAGVVCGVVCIMMVVAAAY) form a helical membrane-spanning segment. Topologically, residues 332–370 (GCIYASLMAKYHRELKKRQPLMGDPEGEHEDQKQISSVA) are cytoplasmic. Residues 351–370 (PLMGDPEGEHEDQKQISSVA) are disordered.

It is found in the membrane. This is Leucine-rich repeat and transmembrane domain-containing protein 2 (LRTM2) from Homo sapiens (Human).